Here is a 74-residue protein sequence, read N- to C-terminus: Large ribosomal subunit protein uL30 (74 aa).

The protein belongs to the universal ribosomal protein uL30 family. In terms of assembly, part of the 50S ribosomal subunit.

In Koribacter versatilis (strain Ellin345), this protein is Large ribosomal subunit protein uL30.